Here is a 121-residue protein sequence, read N- to C-terminus: Protein GAT4 (121 aa).

Residues 29–48 form a disordered region; it reads EAQHGLPRNADSQPARPRTG. The GATA-type zinc finger occupies 53–79; the sequence is CGQCGEIKTSLQWREGPNGAACLCNAC.

In Saccharomyces cerevisiae (strain ATCC 204508 / S288c) (Baker's yeast), this protein is Protein GAT4 (GAT4).